The primary structure comprises 526 residues: ATP synthase subunit alpha (526 aa).

G171–T178 provides a ligand contact to ATP.

Belongs to the ATPase alpha/beta chains family. As to quaternary structure, F-type ATPases have 2 components, CF(1) - the catalytic core - and CF(0) - the membrane proton channel. CF(1) has five subunits: alpha(3), beta(3), gamma(1), delta(1), epsilon(1). CF(0) has four main subunits: a(1), b(1), b'(1) and c(9-12).

It is found in the cell inner membrane. The enzyme catalyses ATP + H2O + 4 H(+)(in) = ADP + phosphate + 5 H(+)(out). In terms of biological role, produces ATP from ADP in the presence of a proton gradient across the membrane. The alpha chain is a regulatory subunit. The polypeptide is ATP synthase subunit alpha (Chlorobaculum tepidum (strain ATCC 49652 / DSM 12025 / NBRC 103806 / TLS) (Chlorobium tepidum)).